The sequence spans 402 residues: Succinylornithine transaminase (402 aa).

The residue at position 252 (K252) is an N6-(pyridoxal phosphate)lysine.

It belongs to the class-III pyridoxal-phosphate-dependent aminotransferase family. AstC subfamily. The cofactor is pyridoxal 5'-phosphate.

It carries out the reaction N(2)-succinyl-L-ornithine + 2-oxoglutarate = N-succinyl-L-glutamate 5-semialdehyde + L-glutamate. It participates in amino-acid degradation; L-arginine degradation via AST pathway; L-glutamate and succinate from L-arginine: step 3/5. Catalyzes the transamination of N(2)-succinylornithine and alpha-ketoglutarate into N(2)-succinylglutamate semialdehyde and glutamate. Can also act as an acetylornithine aminotransferase. This Photorhabdus laumondii subsp. laumondii (strain DSM 15139 / CIP 105565 / TT01) (Photorhabdus luminescens subsp. laumondii) protein is Succinylornithine transaminase.